The primary structure comprises 376 residues: WW domain-binding protein 4 (376 aa).

The Matrin-type zinc-finger motif lies at 11–42 (KFCDYCKCWIADNRPSVEFHERGKNHKENVAK). Over residues 94–107 (ITPVTSTIPPTSTS) the composition is skewed to low complexity. Disordered regions lie at residues 94 to 128 (ITPV…KGRW), 189 to 335 (SRWE…EPKV), and 356 to 376 (FKKR…GDDQ). WW domains lie at 122-155 (DPSK…KPEG) and 163-196 (TAVK…KPDD). Residues 189–198 (SRWEKPDDFI) show a composition bias toward basic and acidic residues. The segment covering 203 to 215 (DLPSSKVNENSLG) has biased composition (polar residues). Basic and acidic residues-rich tracts occupy residues 218 to 229 (DESKSSDSHSDS) and 243 to 257 (ETEK…KNKN). S220, S227, and S229 each carry phosphoserine. The residue at position 262 (S262) is a Phosphoserine. Basic and acidic residues predominate over residues 298-309 (QEIKQEVESHEE). Residues 316–326 (STENEYVSTSE) are compositionally biased toward polar residues. Residues 357-375 (KKRRTENGKSRNLRQRGDD) form an interaction with SNRNP200 region. A compositionally biased stretch (basic and acidic residues) spans 361–376 (TENGKSRNLRQRGDDQ).

In terms of assembly, component of the spliceosome B complex. Associated with U2 snRNPs. Binds splicing factors SNRPB, SNRPC and SF1. Interacts via the WW domains with the Pro-rich domains of KHDRBS1/SAM68. Interacts via the WW domains with the Pro-rich domains of WBP11. Interacts with SNRNP200.

It localises to the nucleus. Its subcellular location is the nucleus speckle. Functionally, involved in pre-mRNA splicing as a component of the spliceosome. May play a role in cross-intron bridging of U1 and U2 snRNPs in the mammalian A complex. The protein is WW domain-binding protein 4 (WBP4) of Homo sapiens (Human).